We begin with the raw amino-acid sequence, 747 residues long: Ferrichrome outer membrane transporter/phage receptor (747 aa).

Positions 1–33 are cleaved as a signal peptide; it reads MARSKTAQPKHSLRKIAVVVATAVSGMSVYAQA. Topologically, residues 34 to 192 are periplasmic; that stretch reads AVEPKEDTIT…NMVSKRPTTE (159 aa). The short motif at 40 to 47 is the TonB box element; the sequence is DTITVTAA. Residues 75–187 enclose the TBDR plug domain; sequence PIQKVPQSIS…PGGLLNMVSK (113 aa). Residues Arg-114, Gln-133, and 148–149 each bind ferrichrome; that span reads FY. The TBDR beta-barrel domain maps to 192–747; it reads EPLKEVQFKA…QVVATATFRF (556 aa). The beta stranded transmembrane segment at 193 to 201 threads the bilayer; the sequence is PLKEVQFKA. Residues 202-206 lie on the Extracellular side of the membrane; that stretch reads GTDSL. Residues 207 to 215 traverse the membrane as a beta stranded segment; sequence FQTGFDFSD. Over 216–222 the chain is Periplasmic; the sequence is SLDDDGV. Residues 223 to 231 form a beta stranded membrane-spanning segment; that stretch reads YSYRLTGLA. Residues 232–245 are Extracellular-facing; sequence RSANAQQKGSEEQR. A beta stranded transmembrane segment spans residues 246–255; the sequence is YAIAPAFTWR. Over 256 to 259 the chain is Periplasmic; the sequence is PDDK. The chain crosses the membrane as a beta stranded span at residues 260 to 268; that stretch reads TNFTFLSYF. The Extracellular segment spans residues 269–312; sequence QNEPETGYYGWLPKEGTVEPLPNGKRLPTDFNEGAKNNTYSRNE. 277 to 279 is a ferrichrome binding site; sequence YGW. A beta stranded membrane pass occupies residues 313–321; that stretch reads KMVGYSFDH. The Periplasmic portion of the chain corresponds to 322 to 326; it reads EFNDT. Residues 327-335 traverse the membrane as a beta stranded segment; the sequence is FTVRQNLRF. At 336-387 the chain is on the extracellular side; the sequence is AENKTSQNSVYGYGVCSDPANAYSKQCAALAPADKGHYLARKYVVDDEKLQN. 346–348 is a binding site for ferrichrome; the sequence is YGY. A disulfide bridge connects residues Cys-351 and Cys-362. A beta stranded membrane pass occupies residues 388-396; it reads FSVDTQLQS. Over 397 to 404 the chain is Periplasmic; that stretch reads KFATGDID. Residues 405 to 413 traverse the membrane as a beta stranded segment; the sequence is HTLLTGVDF. The Extracellular portion of the chain corresponds to 414-464; that stretch reads MRMRNDINAWFGYDDSVPLLNLYNPVNTDFDFNAKDPANSGPYRILNKQKQ. A ferrichrome-binding site is contributed by Phe-424. Residues 465 to 473 form a beta stranded membrane-spanning segment; it reads TGVYVQDQA. Topologically, residues 474–477 are periplasmic; the sequence is QWDK. Residues 478–486 traverse the membrane as a beta stranded segment; sequence VLVTLGGRY. Over 487–508 the chain is Extracellular; the sequence is DWADQESLNRVAGTTDKRDDKQ. Residues 509 to 517 traverse the membrane as a beta stranded segment; the sequence is FTWRGGVNY. At 518-522 the chain is on the periplasmic side; that stretch reads LFDNG. Residues 523–531 form a beta stranded membrane-spanning segment; that stretch reads VTPYFSYSE. The Extracellular portion of the chain corresponds to 532-551; that stretch reads SFEPSSQVGKDGNIFAPSKG. The chain crosses the membrane as a beta stranded span at residues 552–560; that stretch reads KQYEVGVKY. Over 561–565 the chain is Periplasmic; that stretch reads VPEDR. A beta stranded transmembrane segment spans residues 566–574; the sequence is PIVVTGAVY. The Extracellular portion of the chain corresponds to 575-601; the sequence is NLTKTNNLMADPEGSFFSVEGGEIRAR. Residues 602–610 traverse the membrane as a beta stranded segment; the sequence is GVEIEAKAA. The Periplasmic portion of the chain corresponds to 611–613; it reads LSA. A beta stranded membrane pass occupies residues 614-622; sequence SVNVVGSYT. Residues 623–645 are Extracellular-facing; that stretch reads YTDAEYTTDTTYKGNTPAQVPKH. A beta stranded membrane pass occupies residues 646 to 654; it reads MASLWADYT. Topologically, residues 655 to 661 are periplasmic; it reads FFDGPLS. A beta stranded membrane pass occupies residues 662 to 670; sequence GLTLGTGGR. Residues 671-689 are Extracellular-facing; the sequence is YTGSSYGDPANSFKVGSYT. A beta stranded membrane pass occupies residues 690–698; the sequence is VVDALVRYD. Over 699 to 705 the chain is Periplasmic; sequence LARVGMA. A beta stranded membrane pass occupies residues 706-714; it reads GSNVALHVN. Topologically, residues 715–737 are extracellular; it reads NLFDREYVASCFNTYGCFWGAER. Cysteines 725 and 731 form a disulfide. A TonB C-terminal box motif is present at residues 730 to 747; it reads GCFWGAERQVVATATFRF. Ala-735 serves as a coordination point for ferrichrome. Residues 738–746 form a beta stranded membrane-spanning segment; that stretch reads QVVATATFR. Phe-747 is a topological domain (periplasmic).

Belongs to the TonB-dependent receptor family. Monomer. Interacts with TonB. Interacts with Escherichia phage T5 receptor-binding protein pb5 (RBP-pb5); this interaction is necessary for the entry of the viral genome into the host cell.

It is found in the cell outer membrane. Binding of ferrichrome or colicin M enhances the interaction between FhuA and TonB. TonB activates FhuA through interaction with the beta-barrel. Its function is as follows. Involved in the uptake of iron in complex with ferrichrome, a hydroxamate-type siderophore. Binds and transports ferrichrome-iron across the outer membrane. In addition to its role in ferrichrome-iron transport, transports the antibiotic albomycin, which is a structural analog of ferrichrome, and acts as a receptor for colicin M, microcin J25 and bacteriophages T1, T5, phi80 and UC-1. The energy source, which is required for all FhuA functions except infection by phage T5, is provided by the inner membrane TonB system. The protein is Ferrichrome outer membrane transporter/phage receptor of Escherichia coli (strain K12).